A 300-amino-acid chain; its full sequence is Protoheme IX farnesyltransferase 1 (300 aa).

9 consecutive transmembrane segments (helical) span residues 28–48 (VVAL…PTIL), 54–74 (VAGL…NHLI), 100–120 (ALLF…VFTN), 122–142 (LTAW…TAYL), 149–169 (NIVI…TAVT), 176–196 (ALLL…ALAI), 222–242 (CILL…LVGM), 243–263 (SGPL…YKAW), and 280–300 (FSIY…YLWA).

This sequence belongs to the UbiA prenyltransferase family. Protoheme IX farnesyltransferase subfamily.

It localises to the cell inner membrane. It catalyses the reaction heme b + (2E,6E)-farnesyl diphosphate + H2O = Fe(II)-heme o + diphosphate. It participates in porphyrin-containing compound metabolism; heme O biosynthesis; heme O from protoheme: step 1/1. Converts heme B (protoheme IX) to heme O by substitution of the vinyl group on carbon 2 of heme B porphyrin ring with a hydroxyethyl farnesyl side group. This Shewanella sp. (strain ANA-3) protein is Protoheme IX farnesyltransferase 1.